The primary structure comprises 341 residues: Alanine racemase (341 aa).

The active-site Proton acceptor; specific for D-alanine is the Lys33. The residue at position 33 (Lys33) is an N6-(pyridoxal phosphate)lysine. Substrate is bound at residue Arg126. Catalysis depends on Tyr236, which acts as the Proton acceptor; specific for L-alanine. Met284 is a binding site for substrate.

It belongs to the alanine racemase family. The cofactor is pyridoxal 5'-phosphate.

It catalyses the reaction L-alanine = D-alanine. It participates in amino-acid biosynthesis; D-alanine biosynthesis; D-alanine from L-alanine: step 1/1. In terms of biological role, catalyzes the interconversion of L-alanine and D-alanine. The chain is Alanine racemase (alr) from Aquifex pyrophilus.